Reading from the N-terminus, the 164-residue chain is R-phycoerythrin alpha chain (164 aa).

Positions 82 and 139 each coordinate (2R,3E)-phycoerythrobilin.

It belongs to the phycobiliprotein family. Heterodimer of an alpha and a beta chain. Contains two covalently linked bilin chromophores.

It is found in the plastid. Its subcellular location is the chloroplast thylakoid membrane. Functionally, light-harvesting photosynthetic bile pigment-protein from the phycobiliprotein complex. The sequence is that of R-phycoerythrin alpha chain (cpeA) from Pyropia tenera (Nori).